Here is a 418-residue protein sequence, read N- to C-terminus: NADH-quinone oxidoreductase subunit D (418 aa).

This sequence belongs to the complex I 49 kDa subunit family. In terms of assembly, NDH-1 is composed of 14 different subunits. Subunits NuoB, C, D, E, F, and G constitute the peripheral sector of the complex.

It is found in the cell inner membrane. The catalysed reaction is a quinone + NADH + 5 H(+)(in) = a quinol + NAD(+) + 4 H(+)(out). NDH-1 shuttles electrons from NADH, via FMN and iron-sulfur (Fe-S) centers, to quinones in the respiratory chain. The immediate electron acceptor for the enzyme in this species is believed to be ubiquinone. Couples the redox reaction to proton translocation (for every two electrons transferred, four hydrogen ions are translocated across the cytoplasmic membrane), and thus conserves the redox energy in a proton gradient. In Bordetella bronchiseptica (strain ATCC BAA-588 / NCTC 13252 / RB50) (Alcaligenes bronchisepticus), this protein is NADH-quinone oxidoreductase subunit D.